The primary structure comprises 330 residues: D-alanine--D-alanine ligase (330 aa).

An ATP-grasp domain is found at 122–323; that stretch reads NRFLSGFGIR…MKEVLCTIIR (202 aa). An ATP-binding site is contributed by 151–206; it reads IARMGLPLFVKPNVGGSSIATTKVVEAAQLLPAIEQAFSEGEEVMIERLICGTEVT. Positions 277, 290, and 292 each coordinate Mg(2+).

Belongs to the D-alanine--D-alanine ligase family. Requires Mg(2+) as cofactor. It depends on Mn(2+) as a cofactor.

The protein resides in the cytoplasm. It catalyses the reaction 2 D-alanine + ATP = D-alanyl-D-alanine + ADP + phosphate + H(+). Its pathway is cell wall biogenesis; peptidoglycan biosynthesis. Its function is as follows. Cell wall formation. This is D-alanine--D-alanine ligase from Porphyromonas gingivalis (strain ATCC BAA-308 / W83).